The chain runs to 337 residues: ATP-dependent 6-phosphofructokinase (337 aa).

Gly11 contributes to the ATP binding site. 21–25 contacts ADP; sequence RAVVR. Residues 72 to 73 and 102 to 105 contribute to the ATP site; these read RY and GDGS. Asp103 provides a ligand contact to Mg(2+). Position 125 to 127 (125 to 127) interacts with substrate; sequence TID. Asp127 serves as the catalytic Proton acceptor. Arg154 provides a ligand contact to ADP. Substrate is bound by residues Arg162 and 169 to 171; that span reads MGR. Residues 185–187, Arg212, and 214–216 each bind ADP; these read GAD and KNH. Substrate is bound by residues Glu223, Arg245, and 251-254; that span reads HILR.

It belongs to the phosphofructokinase type A (PFKA) family. ATP-dependent PFK group I subfamily. Prokaryotic clade 'B1' sub-subfamily. As to quaternary structure, homotetramer. The cofactor is Mg(2+).

It is found in the cytoplasm. The enzyme catalyses beta-D-fructose 6-phosphate + ATP = beta-D-fructose 1,6-bisphosphate + ADP + H(+). It functions in the pathway carbohydrate degradation; glycolysis; D-glyceraldehyde 3-phosphate and glycerone phosphate from D-glucose: step 3/4. Its activity is regulated as follows. Allosterically activated by ADP and other diphosphonucleosides, and allosterically inhibited by phosphoenolpyruvate. Catalyzes the phosphorylation of D-fructose 6-phosphate to fructose 1,6-bisphosphate by ATP, the first committing step of glycolysis. The polypeptide is ATP-dependent 6-phosphofructokinase (Streptococcus equi subsp. equi (strain 4047)).